The chain runs to 500 residues: MEQFFALFTIFLSFAFPGRCSDVFSRSDFPEGFLFGAGTSAYQWEGAAAEDGRKPSVWDTLCYSRNIGNGDVTCDGYHKYKEDVKLMVDTNLDAFRFSISWSRLIPNGRGSVNQKGLQFYKNLISELITHGIEPHVTLYHYDHPQYLEDEYGGWVNNMMIKDFTAYVDVCFREFGNYVKFWTTINEANVFTIGGYNDGDTPPGRCSLPGKNCLLGNSSTETYIVGHNLLLAHASASRLYKQKYKDKQGGSIGFGLYLMGLTPSTSSKDDAIATQRAKDFYFGWFLGPLIFGDYPDTMKRTIGSRLPVFSEEESEQVKGSSDFIGINHYFAASVTNIKFKPSISGNPDFYSDMGAYVTYLGNFSVIEYPVAPWTMEAVLEYIKQSYDNPPVYILENGTPMTQHKDTHRVEYMNAYIGGVLKSIRNGSDTRGYFVWSFMDLFELIGRYDYGYGLYSVNFSDPHRKRSPRLSAHWYSDFLKGKTSFLDSKGIKELQSNFSSSS.

The first 20 residues, 1-20 (MEQFFALFTIFLSFAFPGRC), serve as a signal peptide directing secretion. Residues Gln-43, His-140, and 185–186 (NE) contribute to the a beta-D-glucoside site. Glu-186 (proton donor) is an active-site residue. An intrachain disulfide couples Cys-205 to Cys-212. Asn-216 carries N-linked (GlcNAc...) asparagine glycosylation. Tyr-328 contacts a beta-D-glucoside. Asn-361 carries an N-linked (GlcNAc...) asparagine glycan. Glu-394 is an a beta-D-glucoside binding site. The active-site Nucleophile is Glu-394. N-linked (GlcNAc...) asparagine glycosylation occurs at Asn-424. Positions 434 and 450 each coordinate a beta-D-glucoside. N-linked (GlcNAc...) asparagine glycosylation is found at Asn-456 and Asn-495.

It belongs to the glycosyl hydrolase 1 family.

The catalysed reaction is Hydrolysis of terminal, non-reducing beta-D-glucosyl residues with release of beta-D-glucose.. The sequence is that of Putative beta-glucosidase 5 from Arabidopsis thaliana (Mouse-ear cress).